Here is a 353-residue protein sequence, read N- to C-terminus: Inositol 3-kinase (353 aa).

ATP is bound by residues S197, 247-250, and N274; that span reads GAGD. D250 acts as the Proton acceptor in catalysis.

It belongs to the carbohydrate kinase pfkB family.

The catalysed reaction is myo-inositol + ATP = 1D-myo-inositol 3-phosphate + ADP + H(+). Kinase that phosphorylates myo-inositol to produce multiple myo-inositol monophosphates. Participates in phytic acid biosynthesis in developing seeds. Phytic acid is the primary storage form of phosphorus in cereal grains and other plant seeds. In Arabidopsis thaliana (Mouse-ear cress), this protein is Inositol 3-kinase.